Consider the following 184-residue polypeptide: ATP synthase subunit delta (184 aa).

This sequence belongs to the ATPase delta chain family. As to quaternary structure, F-type ATPases have 2 components, F(1) - the catalytic core - and F(0) - the membrane proton channel. F(1) has five subunits: alpha(3), beta(3), gamma(1), delta(1), epsilon(1). CF(0) has four main subunits: a(1), b(1), b'(1) and c(10-14). The alpha and beta chains form an alternating ring which encloses part of the gamma chain. F(1) is attached to F(0) by a central stalk formed by the gamma and epsilon chains, while a peripheral stalk is formed by the delta, b and b' chains.

It localises to the cellular thylakoid membrane. In terms of biological role, f(1)F(0) ATP synthase produces ATP from ADP in the presence of a proton or sodium gradient. F-type ATPases consist of two structural domains, F(1) containing the extramembraneous catalytic core and F(0) containing the membrane proton channel, linked together by a central stalk and a peripheral stalk. During catalysis, ATP synthesis in the catalytic domain of F(1) is coupled via a rotary mechanism of the central stalk subunits to proton translocation. This protein is part of the stalk that links CF(0) to CF(1). It either transmits conformational changes from CF(0) to CF(1) or is implicated in proton conduction. The protein is ATP synthase subunit delta of Synechococcus sp. (strain PCC 6716).